We begin with the raw amino-acid sequence, 314 residues long: tRNA-cytidine(32) 2-sulfurtransferase (314 aa).

Positions 53 to 58 (SGGKDS) match the PP-loop motif motif. [4Fe-4S] cluster-binding residues include Cys128, Cys131, and Cys219.

This sequence belongs to the TtcA family. As to quaternary structure, homodimer. Requires Mg(2+) as cofactor. It depends on [4Fe-4S] cluster as a cofactor.

It localises to the cytoplasm. The enzyme catalyses cytidine(32) in tRNA + S-sulfanyl-L-cysteinyl-[cysteine desulfurase] + AH2 + ATP = 2-thiocytidine(32) in tRNA + L-cysteinyl-[cysteine desulfurase] + A + AMP + diphosphate + H(+). It participates in tRNA modification. Catalyzes the ATP-dependent 2-thiolation of cytidine in position 32 of tRNA, to form 2-thiocytidine (s(2)C32). The sulfur atoms are provided by the cysteine/cysteine desulfurase (IscS) system. The sequence is that of tRNA-cytidine(32) 2-sulfurtransferase from Colwellia psychrerythraea (strain 34H / ATCC BAA-681) (Vibrio psychroerythus).